We begin with the raw amino-acid sequence, 125 residues long: Evasin P672 (125 aa).

A signal peptide spans 1–21 (MAHKIAIGLVCVLYALHIMSA). 8 N-linked (GlcNAc...) asparagine glycosylation sites follow: Asn-35, Asn-55, Asn-65, Asn-72, Asn-78, Asn-104, Asn-112, and Asn-118. Disulfide bonds link Cys-70–Cys-110, Cys-87–Cys-115, and Cys-105–Cys-124.

The protein localises to the secreted. Functionally, salivary chemokine-binding protein which has chemokine-neutralizing activity and binds to host chemokines CCL1, CCL2, CCL3, CCL3L1, CCL7, CCL8, CCL11, CCL12, CCL13, CCL14, CCL15, CCL16, CCL18 and CCL23. Binds to CCL8 with 1:1 stoichiometry and disrupts CCL8 homodimer formation. The protein is Evasin P672 of Rhipicephalus pulchellus (Yellow backed tick).